Consider the following 199-residue polypeptide: uncharacterized protein (199 aa).

A signal peptide spans 1–23 (MKPGCTLFFLLCSALTVTTEAHA).

This is an uncharacterized protein from Escherichia coli (strain K12).